A 127-amino-acid chain; its full sequence is Fluoride-specific ion channel FluC (127 aa).

Helical transmembrane passes span 4 to 24 (LDYLTIAFGGAIGAVLRYLVS), 39 to 59 (GTIIVNSVGSFFLSFLMFAAI), 68 to 88 (AILFFGTGLLGAFTTFSTFTY), and 102 to 122 (VAYALVNLLFAFTCAYFGMIL). Glycine 78 and threonine 81 together coordinate Na(+).

The protein belongs to the fluoride channel Fluc/FEX (TC 1.A.43) family.

Its subcellular location is the cell inner membrane. It catalyses the reaction fluoride(in) = fluoride(out). Na(+) is not transported, but it plays an essential structural role and its presence is essential for fluoride channel function. Its function is as follows. Fluoride-specific ion channel. Important for reducing fluoride concentration in the cell, thus reducing its toxicity. The chain is Fluoride-specific ion channel FluC from Thermotoga petrophila (strain ATCC BAA-488 / DSM 13995 / JCM 10881 / RKU-1).